Here is a 284-residue protein sequence, read N- to C-terminus: 4-diphosphocytidyl-2-C-methyl-D-erythritol kinase (284 aa).

K14 is a catalytic residue. 97-107 (PMGGGLGGGSS) provides a ligand contact to ATP. D139 is an active-site residue.

Belongs to the GHMP kinase family. IspE subfamily.

The catalysed reaction is 4-CDP-2-C-methyl-D-erythritol + ATP = 4-CDP-2-C-methyl-D-erythritol 2-phosphate + ADP + H(+). It functions in the pathway isoprenoid biosynthesis; isopentenyl diphosphate biosynthesis via DXP pathway; isopentenyl diphosphate from 1-deoxy-D-xylulose 5-phosphate: step 3/6. Catalyzes the phosphorylation of the position 2 hydroxy group of 4-diphosphocytidyl-2C-methyl-D-erythritol. The sequence is that of 4-diphosphocytidyl-2-C-methyl-D-erythritol kinase from Psychromonas ingrahamii (strain DSM 17664 / CCUG 51855 / 37).